We begin with the raw amino-acid sequence, 93 residues long: Large ribosomal subunit protein uL23cz/uL23cy (93 aa).

Belongs to the universal ribosomal protein uL23 family. Part of the 50S ribosomal subunit.

It is found in the plastid. Its subcellular location is the chloroplast. In terms of biological role, binds to 23S rRNA. This Arabidopsis thaliana (Mouse-ear cress) protein is Large ribosomal subunit protein uL23cz/uL23cy (rpl23-A).